We begin with the raw amino-acid sequence, 149 residues long: Calmodulin (149 aa).

Ala-2 is modified (N-acetylalanine). EF-hand domains are found at residues 8–43 (EQIA…LGQN), 44–79 (PTEA…KMKD), 81–116 (DSEE…LGEK), and 117–149 (LTDE…MMAK). Ca(2+) contacts are provided by Asp-21, Asp-23, Asp-25, Ser-27, Glu-32, Asp-57, Asp-59, Asn-61, Thr-63, Glu-68, Asp-94, Asp-96, Asn-98, Tyr-100, and Asp-105. Residue Lys-116 is modified to N6,N6,N6-trimethyllysine. Positions 130, 132, 134, 136, and 141 each coordinate Ca(2+).

Belongs to the calmodulin family.

Calmodulin mediates the control of a large number of enzymes, ion channels and other proteins by Ca(2+). Among the enzymes to be stimulated by the calmodulin-Ca(2+) complex are a number of protein kinases and phosphatases. In Mougeotia scalaris (Green alga), this protein is Calmodulin.